Here is a 948-residue protein sequence, read N- to C-terminus: Bifunctional uridylyltransferase/uridylyl-removing enzyme (948 aa).

Positions 1–372 are uridylyltransferase; the sequence is METHHIDFST…RFANRSRKIP (372 aa). Positions 373-728 are uridylyl-removing; sequence GTVEFVEDRG…VRTDSFHAIT (356 aa). The region spanning 489–605 is the HD domain; sequence VDEHLIRAVE…IDFADRVQSL (117 aa). 2 consecutive ACT domains span residues 729 to 810 and 840 to 921; these read EITV…EVIA and VIEV…ERMP.

This sequence belongs to the GlnD family. The cofactor is Mg(2+).

The catalysed reaction is [protein-PII]-L-tyrosine + UTP = [protein-PII]-uridylyl-L-tyrosine + diphosphate. It carries out the reaction [protein-PII]-uridylyl-L-tyrosine + H2O = [protein-PII]-L-tyrosine + UMP + H(+). Its activity is regulated as follows. Uridylyltransferase (UTase) activity is inhibited by glutamine, while glutamine activates uridylyl-removing (UR) activity. Its function is as follows. Modifies, by uridylylation and deuridylylation, the PII regulatory proteins (GlnB and homologs), in response to the nitrogen status of the cell that GlnD senses through the glutamine level. Under low glutamine levels, catalyzes the conversion of the PII proteins and UTP to PII-UMP and PPi, while under higher glutamine levels, GlnD hydrolyzes PII-UMP to PII and UMP (deuridylylation). Thus, controls uridylylation state and activity of the PII proteins, and plays an important role in the regulation of nitrogen fixation and metabolism. The sequence is that of Bifunctional uridylyltransferase/uridylyl-removing enzyme from Rhizobium tropici.